A 445-amino-acid polypeptide reads, in one-letter code: Glutamate-1-semialdehyde 2,1-aminomutase (445 aa).

Lys-263 carries the N6-(pyridoxal phosphate)lysine modification.

It belongs to the class-III pyridoxal-phosphate-dependent aminotransferase family. HemL subfamily. It depends on pyridoxal 5'-phosphate as a cofactor.

It is found in the cytoplasm. It carries out the reaction (S)-4-amino-5-oxopentanoate = 5-aminolevulinate. The protein operates within porphyrin-containing compound metabolism; protoporphyrin-IX biosynthesis; 5-aminolevulinate from L-glutamyl-tRNA(Glu): step 2/2. The polypeptide is Glutamate-1-semialdehyde 2,1-aminomutase (Haloarcula marismortui (strain ATCC 43049 / DSM 3752 / JCM 8966 / VKM B-1809) (Halobacterium marismortui)).